Consider the following 303-residue polypeptide: Heme A synthase (303 aa).

At 1-8 the chain is on the cytoplasmic side; sequence MFGKKNLK. Residues 9–29 form a helical membrane-spanning segment; that stretch reads WLGVVATLMMTFVQLGGALVT. The Extracellular portion of the chain corresponds to 30–67; the sequence is KTGSADGCGSSWPLCHGALIPEFFPIDTIIELSHRAVS. Cysteines 37 and 44 form a disulfide. The active site involves glutamate 60. Position 63 (histidine 63) interacts with heme o. The helical transmembrane segment at 68–88 threads the bilayer; it reads ALSLLMVLWLVITAWKHIGYI. The Cytoplasmic segment spans residues 89–93; it reads KEIKP. The chain crosses the membrane as a helical span at residues 94–114; that stretch reads LSIISVGFLLLQALIGAAAVI. Residues 115-125 lie on the Extracellular side of the membrane; the sequence is WQQNDYVLALH. A heme o-binding site is contributed by histidine 125. Residues 126–146 traverse the membrane as a helical segment; it reads FGISLISFSSVFLITLIIFSI. Topologically, residues 147–163 are cytoplasmic; the sequence is DQKYEADELYIKKPLRR. Residues 164 to 184 traverse the membrane as a helical segment; sequence LTWLMAIIIYCGVYTGALVRH. Topologically, residues 185-215 are extracellular; sequence ADASLAYGGWPLPFHDLVPHSEQDWVQLTHR. A heme b-binding site is contributed by histidine 214. Residues 216 to 236 form a helical membrane-spanning segment; the sequence is IMAFIVFTIIMITYIHAVKNY. The Cytoplasmic portion of the chain corresponds to 237–244; it reads PNNRTVHY. The helical transmembrane segment at 245–265 threads the bilayer; it reads GYTAAFILVILQVITGALSIM. Residues 266–270 are Extracellular-facing; it reads TNVNL. The chain crosses the membrane as a helical span at residues 271 to 291; sequence IIALFHALFITYLFGMTTYFI. Residue histidine 276 participates in heme b binding. At 292–303 the chain is on the cytoplasmic side; the sequence is MLMLRSVRSDKQ.

This sequence belongs to the COX15/CtaA family. Type 1 subfamily. In terms of assembly, interacts with CtaB. The cofactor is heme b.

Its subcellular location is the cell membrane. It carries out the reaction Fe(II)-heme o + 2 A + H2O = Fe(II)-heme a + 2 AH2. The protein operates within porphyrin-containing compound metabolism; heme A biosynthesis; heme A from heme O: step 1/1. Functionally, catalyzes the conversion of heme O to heme A by two successive hydroxylations of the methyl group at C8. The first hydroxylation forms heme I, the second hydroxylation results in an unstable dihydroxymethyl group, which spontaneously dehydrates, resulting in the formyl group of heme A. In Staphylococcus aureus (strain Mu3 / ATCC 700698), this protein is Heme A synthase.